The sequence spans 188 residues: Peptidyl-tRNA hydrolase (188 aa).

Position 14 (Tyr14) interacts with tRNA. His19 serves as the catalytic Proton acceptor. TRNA-binding residues include Tyr64, Asn66, and Asn112.

Belongs to the PTH family. As to quaternary structure, monomer.

Its subcellular location is the cytoplasm. It carries out the reaction an N-acyl-L-alpha-aminoacyl-tRNA + H2O = an N-acyl-L-amino acid + a tRNA + H(+). Its function is as follows. Hydrolyzes ribosome-free peptidyl-tRNAs (with 1 or more amino acids incorporated), which drop off the ribosome during protein synthesis, or as a result of ribosome stalling. Functionally, catalyzes the release of premature peptidyl moieties from peptidyl-tRNA molecules trapped in stalled 50S ribosomal subunits, and thus maintains levels of free tRNAs and 50S ribosomes. The sequence is that of Peptidyl-tRNA hydrolase from Clostridium novyi (strain NT).